The primary structure comprises 572 residues: Alpha-1D adrenergic receptor (572 aa).

Positions 1 to 77 (MTFRDLLSVS…SAGEPGSAGA (77 aa)) are disordered. The Extracellular segment spans residues 1 to 95 (MTFRDLLSVS…AVGGLVVSAQ (95 aa)). Gly residues-rich tracts occupy residues 23-33 (SSAGGGGGSAG) and 42-61 (AVGG…GAGS). Residues N65 and N82 are each glycosylated (N-linked (GlcNAc...) asparagine). A helical transmembrane segment spans residues 96-121 (GVGVGVFLAAFILMAVAGNLLVILSV). The Cytoplasmic segment spans residues 122–133 (ACNRHLQTVTNY). The chain crosses the membrane as a helical span at residues 134-159 (FIVNLAVADLLLSATVLPFSATMEVL). Over 160–169 (GFWAFGRAFC) the chain is Extracellular. Residues 170–192 (DVWAAVDVLCCTASILSLCTISV) traverse the membrane as a helical segment. Topologically, residues 193-213 (DRYVGVRHSLKYPAIMTERKA) are cytoplasmic. Residues 214-238 (AAILALLWVVALVVSVGPLLGWKEP) form a helical membrane-spanning segment. Residues 239 to 251 (VPPDERFCGITEE) lie on the Extracellular side of the membrane. The chain crosses the membrane as a helical span at residues 252 to 275 (AGYAVFSSVCSFYLPMAVIVVMYC). The Cytoplasmic portion of the chain corresponds to 276–348 (RVYVVARSTT…KFSREKKAAK (73 aa)). A helical transmembrane segment spans residues 349–373 (TLAIVVGVFVLCWFPFFFVLPLGSL). Residues 374–380 (FPQLKPS) are Extracellular-facing. The helical transmembrane segment at 381 to 405 (EGVFKVIFWLGYFNSCVNPLIYPCS) threads the bilayer. The Cytoplasmic portion of the chain corresponds to 406–572 (SREFKRAFLR…DYSNLRETDI (167 aa)). Residue C419 is the site of S-palmitoyl cysteine attachment. The disordered stretch occupies residues 444–488 (GLRQDCAPSSGDAPPGAPLALTALPDPDPEPPGTPEMQAPVASRR). Residues 450-468 (APSSGDAPPGAPLALTALP) are compositionally biased toward low complexity.

It belongs to the G-protein coupled receptor 1 family. Adrenergic receptor subfamily. ADRA1D sub-subfamily. In terms of assembly, interacts with FLNA (via filamin repeat 21); increases PKA-mediated phosphorylation of FLNA. Palmitoylated. Palmitoylation by ZDHHC21 may increase the expression of the receptor and regulate downstream signaling.

It localises to the cell membrane. Its function is as follows. This alpha-adrenergic receptor mediates its effect through the influx of extracellular calcium. The sequence is that of Alpha-1D adrenergic receptor (ADRA1D) from Homo sapiens (Human).